The following is a 382-amino-acid chain: Dual-specificity RNA methyltransferase RlmN (382 aa).

The Proton acceptor role is filled by Glu95. Positions 101–347 (EDDRGTLCIS…TTVRKTRGDD (247 aa)) constitute a Radical SAM core domain. Cys108 and Cys352 form a disulfide bridge. Positions 115, 119, and 122 each coordinate [4Fe-4S] cluster. S-adenosyl-L-methionine contacts are provided by residues 178-179 (GE), Ser210, 232-234 (SLH), and Asn309. The S-methylcysteine intermediate role is filled by Cys352.

Belongs to the radical SAM superfamily. RlmN family. [4Fe-4S] cluster is required as a cofactor.

It localises to the cytoplasm. The enzyme catalyses adenosine(2503) in 23S rRNA + 2 reduced [2Fe-2S]-[ferredoxin] + 2 S-adenosyl-L-methionine = 2-methyladenosine(2503) in 23S rRNA + 5'-deoxyadenosine + L-methionine + 2 oxidized [2Fe-2S]-[ferredoxin] + S-adenosyl-L-homocysteine. It catalyses the reaction adenosine(37) in tRNA + 2 reduced [2Fe-2S]-[ferredoxin] + 2 S-adenosyl-L-methionine = 2-methyladenosine(37) in tRNA + 5'-deoxyadenosine + L-methionine + 2 oxidized [2Fe-2S]-[ferredoxin] + S-adenosyl-L-homocysteine. Functionally, specifically methylates position 2 of adenine 2503 in 23S rRNA and position 2 of adenine 37 in tRNAs. m2A2503 modification seems to play a crucial role in the proofreading step occurring at the peptidyl transferase center and thus would serve to optimize ribosomal fidelity. The chain is Dual-specificity RNA methyltransferase RlmN from Bordetella avium (strain 197N).